The primary structure comprises 151 residues: Extracellular globin-4 (151 aa).

Residues 6-151 (CCSYEDRREI…LVARIAKDLP (146 aa)) enclose the Globin domain. A disulfide bridge connects residues Cys-7 and Cys-138. His-101 is a heme b binding site.

The protein belongs to the globin family. The extracellular hemoglobin of the earthworm consists of 12 subunits that have a hexagonal bilayer structure with a molecular weight near 3.8 million. Each one-twelfth subunit is composed primarily of disulfide linked trimers (chains A, B, and C) and monomers (chain D).

Its subcellular location is the secreted. The protein is Extracellular globin-4 of Lumbricus terrestris (Common earthworm).